The following is a 346-amino-acid chain: MNNLKWVAYFLKSRMNWIFWILFLNFLMLGISLIDYDFPIDSLFYIVSLNLSLTMIFLLLTYFKEVKLYKHFDKDKEIEEIKHKDLAETPFQRHTVDYLYRQISAHKEKVVEQQLQLNMHEQTITEFVHDIKTPVTAMKLLIDQEKNQERKQALLYEWSRINSMLDTQLYITRLESQRKDMYFDYVSLKRMVIDEIQLTRHISQVKGIGFDVDFKVDDYVYTDIKWCRMIIRQILSNALKYSENFNIEIGTELNDQHVSLYIKDYGRGISKKDMPRIFERGFTSTANRNETTSSGMGLYLVNSVKDQLGIHLQVTSTVGKGTTVRLIFPLQNEIVERMSEVTNLSF.

Transmembrane regions (helical) follow at residues 15-35 and 43-63; these read MNWIFWILFLNFLMLGISLID and LFYIVSLNLSLTMIFLLLTYF. Residues 126–332 form the Histidine kinase domain; that stretch reads EFVHDIKTPV…TVRLIFPLQN (207 aa).

Interacts with GraX.

The protein resides in the cell membrane. It carries out the reaction ATP + protein L-histidine = ADP + protein N-phospho-L-histidine.. Member of the two-component regulatory system GraR/GraS involved in resistance against cationic antimicrobial peptides (CAMPs). Functions as a sensor protein kinase which phosphorylates GraR through the auxiliary protein GraX. In turn, GraR up-regulates many genes such as adhesins, exoproteins, transporters, toxins, and proteins involved in cell wall synthesis. Down-regulates the expression of many genes involved in RNA and amino acid synthesis or glycolysis. This is Sensor histidine kinase GraS (graS) from Staphylococcus aureus (strain COL).